Consider the following 210-residue polypeptide: N-(5'-phosphoribosyl)anthranilate isomerase (210 aa).

The protein belongs to the TrpF family.

The enzyme catalyses N-(5-phospho-beta-D-ribosyl)anthranilate = 1-(2-carboxyphenylamino)-1-deoxy-D-ribulose 5-phosphate. It participates in amino-acid biosynthesis; L-tryptophan biosynthesis; L-tryptophan from chorismate: step 3/5. The polypeptide is N-(5'-phosphoribosyl)anthranilate isomerase (Staphylococcus aureus (strain Mu3 / ATCC 700698)).